A 113-amino-acid chain; its full sequence is Nucleoid-associated protein P9303_00241 (113 aa).

The tract at residues 90–113 (TTTMKEQMEELTGGLNLNLPGMSD) is disordered.

It belongs to the YbaB/EbfC family. Homodimer.

Its subcellular location is the cytoplasm. The protein resides in the nucleoid. In terms of biological role, binds to DNA and alters its conformation. May be involved in regulation of gene expression, nucleoid organization and DNA protection. This is Nucleoid-associated protein P9303_00241 from Prochlorococcus marinus (strain MIT 9303).